We begin with the raw amino-acid sequence, 246 residues long: TATA-box-binding protein (246 aa).

The segment at 1 to 27 (MSSDKTSQQTFKLAPNNSVAQSNSIDQ) is disordered. Tandem repeats lie at residues 53-129 (LQNI…AKII) and 143-220 (IQNI…YWVL).

The protein belongs to the TBP family. Belongs to the TFIID complex together with the TBP-associated factors (TAFs). Binds DNA as monomer.

It localises to the nucleus. In terms of biological role, general transcription factor that functions at the core of the DNA-binding multiprotein factor TFIID. Binding of TFIID to the TATA box is the initial transcriptional step of the pre-initiation complex (PIC), playing a role in the activation of eukaryotic genes transcribed by RNA polymerase II. The chain is TATA-box-binding protein from Tetrahymena thermophila.